Reading from the N-terminus, the 141-residue chain is Ribonuclease P protein component (141 aa).

The span at 114-134 (RRIKAKGERRGDGKRRTERPE) shows a compositional bias: basic and acidic residues. The tract at residues 114–141 (RRIKAKGERRGDGKRRTERPESGPVNGK) is disordered.

Belongs to the RnpA family. Consists of a catalytic RNA component (M1 or rnpB) and a protein subunit.

The catalysed reaction is Endonucleolytic cleavage of RNA, removing 5'-extranucleotides from tRNA precursor.. RNaseP catalyzes the removal of the 5'-leader sequence from pre-tRNA to produce the mature 5'-terminus. It can also cleave other RNA substrates such as 4.5S RNA. The protein component plays an auxiliary but essential role in vivo by binding to the 5'-leader sequence and broadening the substrate specificity of the ribozyme. This is Ribonuclease P protein component from Brucella anthropi (strain ATCC 49188 / DSM 6882 / CCUG 24695 / JCM 21032 / LMG 3331 / NBRC 15819 / NCTC 12168 / Alc 37) (Ochrobactrum anthropi).